The sequence spans 1145 residues: DNA polymerase subunit gamma-1, mitochondrial (1145 aa).

A mitochondrion-targeting transit peptide spans 1–9 (MQFHLIRKY).

It belongs to the DNA polymerase type-A family. In terms of assembly, component of the DNA polymerase gamma complex consisting of two subunits: the catalytic subunit DNApol-gamma/DNApolG1 and the accessory subunit PolG2/DNApol-gamma35. Mg(2+) is required as a cofactor.

It is found in the mitochondrion. The catalysed reaction is DNA(n) + a 2'-deoxyribonucleoside 5'-triphosphate = DNA(n+1) + diphosphate. Stimulated by KCl, and inhibited by the small molecules o 2',3'-dideoxythymidine 5'-triphosphate (d2TTP) and N-ethylmaleimide (NEM). Functionally, as the catalytic component of the DNA polymerase gamma complex is involved in the replication of mitochondrial DNA (mtDNA). Has both 5'-3' DNA polymerase and a highly mispair-specific 3'-5' exonuclease activity. At the end of mtDNA replication DNA ends are ligated to produce a closed circular mtDNA molecule, its exonuclease activity is required for formation of these ligatable ends by preventing DNA synthesis from continuing past the 5'-end of downstream DNA into duplex DNA regions. Does not possess DNA primase activity, does not catalyze strand displacement synthesis and does not contain a 5'-3' exonuclease activity to catalyze nick translation. Important for promoting the elimination of paternal mitochondrial DNA during spermatogenesis, however its exact role in this function has not yet been identified and appears to be independent of its 3'-5'-exonuclease activity and only partially dependent on its DNA polymerase activity. This Drosophila melanogaster (Fruit fly) protein is DNA polymerase subunit gamma-1, mitochondrial.